An 801-amino-acid chain; its full sequence is Glycerol-3-phosphate acyltransferase 2, mitochondrial (801 aa).

The disordered stretch occupies residues 1 to 24 (METMLKSNPQMQQRNNHSGQETSL). The Cytoplasmic segment spans residues 1–305 (METMLKSNPQ…PGPRLSALGQ (305 aa)). The segment at 180 to 290 (QLHKGQMKMV…SGQPLLIFLE (111 aa)) is acyltransferase. Residues 205 to 210 (HKSLLD) carry the HXXXXD motif motif. A helical membrane pass occupies residues 306–332 (AWLGLVVQAVQAGIVPDATLVPVATAY). At 333–449 (DLVPDAPCNM…QLLVRRLSRH (117 aa)) the chain is on the mitochondrial intermembrane side. Residues 450–472 (VLSASVASSAVMSTAIMATLLLL) traverse the membrane as a helical segment. The Cytoplasmic segment spans residues 473–795 (KHQKGVVLSQ…DNQDKLEQFI (323 aa)).

It belongs to the GPAT/DAPAT family. In terms of assembly, interacts with PIWIL2. In terms of tissue distribution, expressed in spermatocytes and spermatides.

Its subcellular location is the mitochondrion outer membrane. The enzyme catalyses sn-glycerol 3-phosphate + an acyl-CoA = a 1-acyl-sn-glycero-3-phosphate + CoA. It carries out the reaction a 1-acyl-sn-glycero-3-phosphate + an acyl-CoA = a 1,2-diacyl-sn-glycero-3-phosphate + CoA. The catalysed reaction is 1-(9Z-octadecenoyl)-sn-glycero-3-phosphate + (9Z)-octadecenoyl-CoA = 1,2-di-(9Z-octadecenoyl)-sn-glycero-3-phosphate + CoA. It catalyses the reaction 1-(9Z-octadecenoyl)-sn-glycero-3-phosphate + (5Z,8Z,11Z,14Z)-eicosatetraenoyl-CoA = 1-(9Z)-octadecenoyl-2-(5Z,8Z,11Z,14Z)-eicosatetraenoyl-sn-glycero-3-phosphate + CoA. The enzyme catalyses (5Z,8Z,11Z,14Z)-eicosatetraenoyl-CoA + sn-glycerol 3-phosphate = 1-(5Z,8Z,11Z,14Z-eicosatetraenoyl)-sn-glycero-3-phosphate + CoA. It functions in the pathway phospholipid metabolism; CDP-diacylglycerol biosynthesis; CDP-diacylglycerol from sn-glycerol 3-phosphate: step 1/3. Its activity is regulated as follows. Inhibited by N-ethylmaleimide (NEM). Transfers an acyl-group from acyl-ACP to the sn-1 position of glycerol-3-phosphate producing a lysophosphatidic acid (LPA), an essential step for the triacylglycerol (TAG) and glycerophospholipids. In vitro also transfers an acyl-group from acyl-ACP to the LPA producing a phosphatidic acid (PA). Prefers arachidonoyl-CoA as the acyl donor. Required for primary processing step during piRNA biosynthesis. Molecular mechanisms by which it promotes piRNA biosynthesis are unclear and do not involve its acyltransferase activity. This Rattus norvegicus (Rat) protein is Glycerol-3-phosphate acyltransferase 2, mitochondrial.